We begin with the raw amino-acid sequence, 362 residues long: tRNA/tmRNA (uracil-C(5))-methyltransferase (362 aa).

The S-adenosyl-L-methionine site is built by glutamine 182, tyrosine 210, asparagine 215, glutamate 231, and aspartate 293. Cysteine 318 functions as the Nucleophile in the catalytic mechanism. Residue glutamate 352 is the Proton acceptor of the active site.

This sequence belongs to the class I-like SAM-binding methyltransferase superfamily. RNA M5U methyltransferase family. TrmA subfamily.

The enzyme catalyses uridine(54) in tRNA + S-adenosyl-L-methionine = 5-methyluridine(54) in tRNA + S-adenosyl-L-homocysteine + H(+). It carries out the reaction uridine(341) in tmRNA + S-adenosyl-L-methionine = 5-methyluridine(341) in tmRNA + S-adenosyl-L-homocysteine + H(+). Dual-specificity methyltransferase that catalyzes the formation of 5-methyluridine at position 54 (m5U54) in all tRNAs, and that of position 341 (m5U341) in tmRNA (transfer-mRNA). The chain is tRNA/tmRNA (uracil-C(5))-methyltransferase from Neisseria meningitidis serogroup A / serotype 4A (strain DSM 15465 / Z2491).